The chain runs to 207 residues: Holliday junction branch migration complex subunit RuvA (207 aa).

A domain I region spans residues 1–64; sequence MIGLISGQVQ…EDAQLLYGFI (64 aa). The segment at 65 to 143 is domain II; it reads DRKERDVFRQ…NIEVDNSNLE (79 aa). Residues 144 to 152 form a flexible linker region; that stretch reads FAIQPAPIS. Positions 153-207 are domain III; it reads AEDSIIAEVEGALMSLGYKEKEAQQAIKAAKSNGETFADTQSLLKATLQQFQSFK.

This sequence belongs to the RuvA family. As to quaternary structure, homotetramer. Forms an RuvA(8)-RuvB(12)-Holliday junction (HJ) complex. HJ DNA is sandwiched between 2 RuvA tetramers; dsDNA enters through RuvA and exits via RuvB. An RuvB hexamer assembles on each DNA strand where it exits the tetramer. Each RuvB hexamer is contacted by two RuvA subunits (via domain III) on 2 adjacent RuvB subunits; this complex drives branch migration. In the full resolvosome a probable DNA-RuvA(4)-RuvB(12)-RuvC(2) complex forms which resolves the HJ.

It localises to the cytoplasm. In terms of biological role, the RuvA-RuvB-RuvC complex processes Holliday junction (HJ) DNA during genetic recombination and DNA repair, while the RuvA-RuvB complex plays an important role in the rescue of blocked DNA replication forks via replication fork reversal (RFR). RuvA specifically binds to HJ cruciform DNA, conferring on it an open structure. The RuvB hexamer acts as an ATP-dependent pump, pulling dsDNA into and through the RuvAB complex. HJ branch migration allows RuvC to scan DNA until it finds its consensus sequence, where it cleaves and resolves the cruciform DNA. The protein is Holliday junction branch migration complex subunit RuvA of Psychrobacter arcticus (strain DSM 17307 / VKM B-2377 / 273-4).